We begin with the raw amino-acid sequence, 70 residues long: Cold shock-like protein CspG (70 aa).

Residues 7 to 67 (GLVKWFNADK…GQRGPAAANV (61 aa)) enclose the CSD domain.

It is found in the cytoplasm. The sequence is that of Cold shock-like protein CspG (cspG) from Escherichia coli O157:H7.